Consider the following 143-residue polypeptide: Ribosome-binding factor A (143 aa).

The interval 123–143 (DKSLQENYKQNDKETKAEKLR) is disordered.

Belongs to the RbfA family. In terms of assembly, monomer. Binds 30S ribosomal subunits, but not 50S ribosomal subunits or 70S ribosomes.

Its subcellular location is the cytoplasm. Its function is as follows. One of several proteins that assist in the late maturation steps of the functional core of the 30S ribosomal subunit. Associates with free 30S ribosomal subunits (but not with 30S subunits that are part of 70S ribosomes or polysomes). Required for efficient processing of 16S rRNA. May interact with the 5'-terminal helix region of 16S rRNA. This Francisella tularensis subsp. mediasiatica (strain FSC147) protein is Ribosome-binding factor A.